Here is a 195-residue protein sequence, read N- to C-terminus: MSVLVPMVVEQTSRGERAYDIYSRLLKDRVIFLVGQVEDHMANLAIAQMLFLESENPNKDINLYINSPGGAVTSAMAIYDTMQFVKPDVRTLCIGQAASAGALLLAGGAKGKRHCLPHSSVMIHQVLGGYQGQGTDIQIHAKQTQRVSDQLNQILAKHTGKDIERVEKDTNRDYFLTPEEAVEYGLIDSIFKERP.

Serine 99 serves as the catalytic Nucleophile. Histidine 124 is a catalytic residue.

It belongs to the peptidase S14 family. As to quaternary structure, fourteen ClpP subunits assemble into 2 heptameric rings which stack back to back to give a disk-like structure with a central cavity, resembling the structure of eukaryotic proteasomes.

Its subcellular location is the cytoplasm. The catalysed reaction is Hydrolysis of proteins to small peptides in the presence of ATP and magnesium. alpha-casein is the usual test substrate. In the absence of ATP, only oligopeptides shorter than five residues are hydrolyzed (such as succinyl-Leu-Tyr-|-NHMec, and Leu-Tyr-Leu-|-Tyr-Trp, in which cleavage of the -Tyr-|-Leu- and -Tyr-|-Trp bonds also occurs).. Functionally, cleaves peptides in various proteins in a process that requires ATP hydrolysis. Has a chymotrypsin-like activity. Plays a major role in the degradation of misfolded proteins. This Coxiella burnetii (strain RSA 331 / Henzerling II) protein is ATP-dependent Clp protease proteolytic subunit.